Reading from the N-terminus, the 132-residue chain is Small ribosomal subunit protein uS8 (132 aa).

Belongs to the universal ribosomal protein uS8 family. As to quaternary structure, part of the 30S ribosomal subunit. Contacts proteins S5 and S12.

Its function is as follows. One of the primary rRNA binding proteins, it binds directly to 16S rRNA central domain where it helps coordinate assembly of the platform of the 30S subunit. The sequence is that of Small ribosomal subunit protein uS8 from Streptococcus gordonii (strain Challis / ATCC 35105 / BCRC 15272 / CH1 / DL1 / V288).